A 470-amino-acid chain; its full sequence is Aminoacyl transferase sphA (470 aa).

Pyridoxal 5'-phosphate contacts are provided by serine 212, histidine 244, and threonine 272. At lysine 275 the chain carries N6-(pyridoxal phosphate)lysine.

This sequence belongs to the class-II pyridoxal-phosphate-dependent aminotransferase family. BioF subfamily. As to quaternary structure, homodimer. Requires pyridoxal 5'-phosphate as cofactor.

The enzyme catalyses aminomalonate + (3R)-hydroxyoctadeca-4,10-dienoyl-[ACP] = 3-oxopresphingofungin + holo-[ACP] + CO2. It functions in the pathway secondary metabolite biosynthesis. In terms of biological role, aminoacyl transferase; part of the gene cluster that mediates the biosynthesis of sphingofungins, bioactive molecules acting as sphingolipid inhibitors via inhibiting serine palmitoyl transferase (SPT). Within the pathway, sphA transfers aminomalonate onto the sphB product 3-hydroxyoctadeca-4,10-dienoyl-ACP to produce 3-keto-presphingofungin. The substrate specificity of sphA using only aminomalonate in Aspergillus fumigatus is responsible for the biosynthesis of sphingofungins B and C but not E and F like in Byssochlamys spectabilis. The PKS sphB does not contain any putative thioesterase domain for releasing the nascent polyketide chain and it has been suggested that aminoacyl transferases can facilitate the polyketide chain release. Sphingofungin biosynthesis starts with the PKS sphB that produces an C18 polyketide precursor 3-hydroxyoctadeca-4,10-dienoyl-ACP containing one delta-6 desaturation and one delta-12 desaturation. The aminoacyl transferase sphA uses the sphB product to produce 3-keto-presphingofungin by adding an aminomalonate molecule. SphF then reduces the C-3 ketone of 3-keto-presphingofungin which leads to presphingofungin. The cytochrome P450 monooxygenase sphH converts presphingofungin into sphingofungin B1 which is further converted to sphingofungin B by the dioxygenase sphC. SphC is also able to convert presphingofungin into sphingofungin B2. The acetyltransferase sphE acetylates sphingofungin B to produce sphingofungin C, but can also convert sphingofungin B1 into sphingofungin C1 and sphingofungin B2 into sphingofungin C2. Finally, sphingofungin C can be spontaneously converted into sphingofungin D. This chain is Aminoacyl transferase sphA, found in Aspergillus fumigatus (strain CBS 144.89 / FGSC A1163 / CEA10) (Neosartorya fumigata).